We begin with the raw amino-acid sequence, 415 residues long: Beta-1,4-glucuronyltransferase 1 (415 aa).

Topologically, residues 1 to 8 are cytoplasmic; it reads MQMSYAIR. Residues 9 to 36 form a helical; Signal-anchor for type II membrane protein membrane-spanning segment; the sequence is CAFYQLLLAALMLVAMLQLLYLSLLSGL. The Lumenal segment spans residues 37–415; that stretch reads HGQEEQDQYF…AKYPNSPRRC (379 aa). Asn204 carries N-linked (GlcNAc...) asparagine glycosylation. Positions 227 and 229 each coordinate Mn(2+). The N-linked (GlcNAc...) asparagine glycan is linked to Asn300.

This sequence belongs to the glycosyltransferase 49 family. Interacts with LARGE1 and LARGE2. Mn(2+) is required as a cofactor.

The protein localises to the golgi apparatus membrane. It catalyses the reaction 3-O-[beta-D-Xyl-(1-&gt;4)-Rib-ol-P-Rib-ol-P-3-beta-D-GalNAc-(1-&gt;3)-beta-D-GlcNAc-(1-&gt;4)-(O-6-P-alpha-D-Man)]-Thr-[protein] + UDP-alpha-D-glucuronate = 3-O-[beta-D-GlcA-(1-&gt;3)-beta-D-Xyl-(1-&gt;4)-Rib-ol-P-Rib-ol-P-3-beta-D-GalNAc-(1-&gt;3)-beta-D-GlcNAc-(1-&gt;4)-(O-6-P-alpha-D-Man)]-Thr-[protein] + UDP + H(+). It functions in the pathway protein modification; protein glycosylation. Beta-1,4-glucuronyltransferase involved in O-mannosylation of alpha-dystroglycan (DAG1). Transfers a glucuronic acid (GlcA) residue onto a xylose (Xyl) acceptor to produce the glucuronyl-beta-1,4-xylose-beta disaccharide primer, which is further elongated by LARGE1, during synthesis of phosphorylated O-mannosyl glycan. Phosphorylated O-mannosyl glycan is a carbohydrate structure present in alpha-dystroglycan (DAG1), which is required for binding laminin G-like domain-containing extracellular proteins with high affinity. Required for axon guidance; via its function in O-mannosylation of alpha-dystroglycan (DAG1). This is Beta-1,4-glucuronyltransferase 1 from Pongo abelii (Sumatran orangutan).